The following is a 219-amino-acid chain: Thymidylate kinase (219 aa).

9–16 contacts ATP; sequence GIEGCGKT.

Belongs to the thymidylate kinase family.

The catalysed reaction is dTMP + ATP = dTDP + ADP. Phosphorylation of dTMP to form dTDP in both de novo and salvage pathways of dTTP synthesis. The polypeptide is Thymidylate kinase (Syntrophus aciditrophicus (strain SB)).